A 270-amino-acid polypeptide reads, in one-letter code: Tetraspanin-2 (270 aa).

The Cytoplasmic segment spans residues 1–8 (MALANNLT). The chain crosses the membrane as a helical span at residues 9–29 (AILNLLALLCSIPITASGIWL). The Extracellular segment spans residues 30–42 (ASKPDNECVNLLR). Residues 43-63 (WPVVVLGVLILVVSATGFIGA) traverse the membrane as a helical segment. Residues 64–74 (YKYKETLLAVY) are Cytoplasmic-facing. Residues 75–95 (LCCMAILIGLLLVVLIFAFVV) traverse the membrane as a helical segment. At 96-232 (TRPDGSYRVP…NLRKEWRKAN (137 aa)) the chain is on the extracellular side. A helical transmembrane segment spans residues 233-253 (LILIITVVVLIWVYVIACSAF). Residues 254-270 (RNAQTEDLFRKYKQGWV) are Cytoplasmic-facing.

This sequence belongs to the tetraspanin (TM4SF) family.

Its subcellular location is the membrane. Its function is as follows. May be involved in the regulation of cell differentiation. This is Tetraspanin-2 (TET2) from Arabidopsis thaliana (Mouse-ear cress).